Consider the following 362-residue polypeptide: Diphosphomevalonate decarboxylase (362 aa).

(R)-5-diphosphomevalonate is bound by residues 17–20, Arg72, 150–155, and Thr206; these read YWGK and SGSACR.

Belongs to the diphosphomevalonate decarboxylase family. Homodimer.

It carries out the reaction (R)-5-diphosphomevalonate + ATP = isopentenyl diphosphate + ADP + phosphate + CO2. It participates in isoprenoid biosynthesis; isopentenyl diphosphate biosynthesis via mevalonate pathway; isopentenyl diphosphate from (R)-mevalonate: step 3/3. Its function is as follows. Diphosphomevalonate decarboxylase; part of the second module of ergosterol biosynthesis pathway that includes the middle steps of the pathway. MVD1 converts diphosphomevalonate into isopentenyl diphosphate. The second module is carried out in the vacuole and involves the formation of farnesyl diphosphate, which is also an important intermediate in the biosynthesis of ubiquinone, dolichol, heme and prenylated proteins. Activity by the mevalonate kinase ERG12 first converts mevalonate into 5-phosphomevalonate. 5-phosphomevalonate is then further converted to 5-diphosphomevalonate by the phosphomevalonate kinase ERG8. The diphosphomevalonate decarboxylase MVD then produces isopentenyl diphosphate. The isopentenyl-diphosphate delta-isomerase IDI1 then catalyzes the 1,3-allylic rearrangement of the homoallylic substrate isopentenyl (IPP) to its highly electrophilic allylic isomer, dimethylallyl diphosphate (DMAPP). Finally the farnesyl diphosphate synthase ERG20 catalyzes the sequential condensation of isopentenyl pyrophosphate with dimethylallyl pyrophosphate, and then with the resultant geranylpyrophosphate to the ultimate product farnesyl pyrophosphate. This is Diphosphomevalonate decarboxylase from Candida albicans (strain SC5314 / ATCC MYA-2876) (Yeast).